Here is a 715-residue protein sequence, read N- to C-terminus: Fatty acid oxidation complex subunit alpha (715 aa).

Residues Met1–Pro190 are enoyl-CoA hydratase. The 3-hydroxyacyl-CoA dehydrogenase stretch occupies residues Gly306–Gly714.

This sequence in the N-terminal section; belongs to the enoyl-CoA hydratase/isomerase family. In the central section; belongs to the 3-hydroxyacyl-CoA dehydrogenase family. In terms of assembly, heterotetramer of two alpha chains (FadJ) and two beta chains (FadI).

Its subcellular location is the cytoplasm. It catalyses the reaction a (3S)-3-hydroxyacyl-CoA = a (2E)-enoyl-CoA + H2O. The catalysed reaction is a 4-saturated-(3S)-3-hydroxyacyl-CoA = a (3E)-enoyl-CoA + H2O. The enzyme catalyses a (3S)-3-hydroxyacyl-CoA + NAD(+) = a 3-oxoacyl-CoA + NADH + H(+). It carries out the reaction (3S)-3-hydroxybutanoyl-CoA = (3R)-3-hydroxybutanoyl-CoA. It participates in lipid metabolism; fatty acid beta-oxidation. Functionally, catalyzes the formation of a hydroxyacyl-CoA by addition of water on enoyl-CoA. Also exhibits 3-hydroxyacyl-CoA epimerase and 3-hydroxyacyl-CoA dehydrogenase activities. The polypeptide is Fatty acid oxidation complex subunit alpha (Salmonella typhimurium (strain LT2 / SGSC1412 / ATCC 700720)).